Consider the following 412-residue polypeptide: Aspartate aminotransferase, cytoplasmic (412 aa).

Ala-2 is modified (N-acetylalanine). Gly-38, Trp-140, and Asn-194 together coordinate L-aspartate. Lys-258 is modified (N6-(pyridoxal phosphate)lysine). Arg-386 contributes to the L-aspartate binding site.

It belongs to the class-I pyridoxal-phosphate-dependent aminotransferase family. Homodimer. The cofactor is pyridoxal 5'-phosphate.

It is found in the cytoplasm. It carries out the reaction L-aspartate + 2-oxoglutarate = oxaloacetate + L-glutamate. The enzyme catalyses L-cysteine + 2-oxoglutarate = 2-oxo-3-sulfanylpropanoate + L-glutamate. The catalysed reaction is (2S)-2-aminobutanoate + 2-oxoglutarate = 2-oxobutanoate + L-glutamate. It catalyses the reaction 3-sulfino-L-alanine + 2-oxoglutarate = 3-sulfinopyruvate + L-glutamate. Biosynthesis of L-glutamate from L-aspartate or L-cysteine. Important regulator of levels of glutamate, the major excitatory neurotransmitter of the vertebrate central nervous system. Acts as a scavenger of glutamate in brain neuroprotection. The aspartate aminotransferase activity is involved in hepatic glucose synthesis during development and in adipocyte glyceroneogenesis. Using L-cysteine as substrate, regulates levels of mercaptopyruvate, an important source of hydrogen sulfide. Mercaptopyruvate is converted into H(2)S via the action of 3-mercaptopyruvate sulfurtransferase (3MST). Hydrogen sulfide is an important synaptic modulator and neuroprotectant in the brain. In Gallus gallus (Chicken), this protein is Aspartate aminotransferase, cytoplasmic.